The sequence spans 77 residues: UPF0401 protein UTI89_C4989 (77 aa).

This sequence belongs to the UPF0401 family.

This is UPF0401 protein UTI89_C4989 from Escherichia coli (strain UTI89 / UPEC).